The chain runs to 342 residues: Phosphate acyltransferase (342 aa).

It belongs to the PlsX family. Homodimer. Probably interacts with PlsY.

It localises to the cytoplasm. It carries out the reaction a fatty acyl-[ACP] + phosphate = an acyl phosphate + holo-[ACP]. It participates in lipid metabolism; phospholipid metabolism. Catalyzes the reversible formation of acyl-phosphate (acyl-PO(4)) from acyl-[acyl-carrier-protein] (acyl-ACP). This enzyme utilizes acyl-ACP as fatty acyl donor, but not acyl-CoA. In Shewanella sediminis (strain HAW-EB3), this protein is Phosphate acyltransferase.